An 874-amino-acid polypeptide reads, in one-letter code: Alanine--tRNA ligase (874 aa).

His-564, His-568, Cys-665, and His-669 together coordinate Zn(2+).

Belongs to the class-II aminoacyl-tRNA synthetase family. Zn(2+) is required as a cofactor.

It localises to the cytoplasm. It catalyses the reaction tRNA(Ala) + L-alanine + ATP = L-alanyl-tRNA(Ala) + AMP + diphosphate. Catalyzes the attachment of alanine to tRNA(Ala) in a two-step reaction: alanine is first activated by ATP to form Ala-AMP and then transferred to the acceptor end of tRNA(Ala). Also edits incorrectly charged Ser-tRNA(Ala) and Gly-tRNA(Ala) via its editing domain. The sequence is that of Alanine--tRNA ligase from Burkholderia thailandensis (strain ATCC 700388 / DSM 13276 / CCUG 48851 / CIP 106301 / E264).